We begin with the raw amino-acid sequence, 320 residues long: Lipoyl synthase (320 aa).

Positions 67, 72, 78, 93, 97, 100, and 307 each coordinate [4Fe-4S] cluster. Residues 79–296 (FNHGTATFMI…RDKAQAMGFE (218 aa)) enclose the Radical SAM core domain.

The protein belongs to the radical SAM superfamily. Lipoyl synthase family. Requires [4Fe-4S] cluster as cofactor.

The protein resides in the cytoplasm. It carries out the reaction [[Fe-S] cluster scaffold protein carrying a second [4Fe-4S](2+) cluster] + N(6)-octanoyl-L-lysyl-[protein] + 2 oxidized [2Fe-2S]-[ferredoxin] + 2 S-adenosyl-L-methionine + 4 H(+) = [[Fe-S] cluster scaffold protein] + N(6)-[(R)-dihydrolipoyl]-L-lysyl-[protein] + 4 Fe(3+) + 2 hydrogen sulfide + 2 5'-deoxyadenosine + 2 L-methionine + 2 reduced [2Fe-2S]-[ferredoxin]. Its pathway is protein modification; protein lipoylation via endogenous pathway; protein N(6)-(lipoyl)lysine from octanoyl-[acyl-carrier-protein]: step 2/2. Functionally, catalyzes the radical-mediated insertion of two sulfur atoms into the C-6 and C-8 positions of the octanoyl moiety bound to the lipoyl domains of lipoate-dependent enzymes, thereby converting the octanoylated domains into lipoylated derivatives. This is Lipoyl synthase from Pasteurella multocida (strain Pm70).